The sequence spans 189 residues: Phosphoheptose isomerase (189 aa).

Residues 33–189 (CTDTLKAGNK…ELVEREIYGG (157 aa)) form the SIS domain. Substrate is bound at residue 48-50 (NGG). The Zn(2+) site is built by histidine 57 and glutamate 61. Substrate is bound by residues glutamate 61, 90 to 91 (ND), 116 to 118 (STS), serine 121, and glutamine 168. Positions 168 and 176 each coordinate Zn(2+).

The protein belongs to the SIS family. GmhA subfamily. Zn(2+) serves as cofactor.

Its subcellular location is the cytoplasm. It catalyses the reaction 2 D-sedoheptulose 7-phosphate = D-glycero-alpha-D-manno-heptose 7-phosphate + D-glycero-beta-D-manno-heptose 7-phosphate. Its pathway is carbohydrate biosynthesis; D-glycero-D-manno-heptose 7-phosphate biosynthesis; D-glycero-alpha-D-manno-heptose 7-phosphate and D-glycero-beta-D-manno-heptose 7-phosphate from sedoheptulose 7-phosphate: step 1/1. Its function is as follows. Catalyzes the isomerization of sedoheptulose 7-phosphate in D-glycero-D-manno-heptose 7-phosphate. This Akkermansia muciniphila (strain ATCC BAA-835 / DSM 22959 / JCM 33894 / BCRC 81048 / CCUG 64013 / CIP 107961 / Muc) protein is Phosphoheptose isomerase.